Here is a 1405-residue protein sequence, read N- to C-terminus: DNA-directed RNA polymerase subunit beta' (1405 aa).

4 residues coordinate Zn(2+): Cys71, Cys73, Cys86, and Cys89. Asp462, Asp464, and Asp466 together coordinate Mg(2+). 4 residues coordinate Zn(2+): Cys820, Cys893, Cys900, and Cys903.

This sequence belongs to the RNA polymerase beta' chain family. As to quaternary structure, the RNAP catalytic core consists of 2 alpha, 1 beta, 1 beta' and 1 omega subunit. When a sigma factor is associated with the core the holoenzyme is formed, which can initiate transcription. Mg(2+) is required as a cofactor. The cofactor is Zn(2+).

It carries out the reaction RNA(n) + a ribonucleoside 5'-triphosphate = RNA(n+1) + diphosphate. In terms of biological role, DNA-dependent RNA polymerase catalyzes the transcription of DNA into RNA using the four ribonucleoside triphosphates as substrates. The polypeptide is DNA-directed RNA polymerase subunit beta' (Methylorubrum extorquens (strain CM4 / NCIMB 13688) (Methylobacterium extorquens)).